Consider the following 752-residue polypeptide: MQQNVKEKHAGKSDTSVSSLECEIDYHIEGSDGIPVVEPKISEFVDMESFIRRVERLGKKYGAIKVVRPSSVLNPWNEDTMKPSDVKMDLWLERMVRRKGEYFEIQSDIDHGSAGPKKPTDMNVDDRFPSNAGSSNDFENNVAKAIAYYWRSLTHDSLWYGYTNRPSIPFYFIPSISAAQKDRVHLRSNTLINTWPNVGHLFAGKWKTTLPWRVESPELHAVQVHLGGSSLQWYVIPSAHSESFKKLAGKLAQDEHWRCSDFLLHQNILFPPSTLVQNGIVTYSTVLKQDELLITFPGTHHSAFCLGDAVLRRFVFRSPRSASNYEFSNLRRLMVSESLYSSKSLWPHSHKPQRACSQKFLDEFYLHDLPESNIHDSGNFHPIHSSVDNNSFSQRDFDSPNSINPPSPLMSNHESASTEHFNSTTTTEKELSSLHVGEERKNRSLPLSLIWNSKAREEYIKKQKEENGDNIEFSHFDPLYTRPSSHPLHPPPILGLPVPAQFARGELFLGRILEDRVSEHMLLLECEKSDVVEVPYECILTSSSAAGRRESSYYNPALKAPNIVYDDGVPINWNEYSELPSLDRFVLPKLLPGKPIEFTPPISVEPTSIKTIAAEESSEPTSSVDVAPTPVEDVNVNLESISNTNESVVDLSDPLVSKNGFEDVERSSVADLEEDVLETRSSIFETSDIDDRLTVIDRSQSVVPSESEFSIAGANLTRRNAVDFSVSLDTYELYVSDEVENVDDFSLFPSLE.

Residues I34–P75 form the JmjN domain. The 172-residue stretch at Y162–L333 folds into the JmjC domain. 2 stretches are compositionally biased toward polar residues: residues S391 to S402 and L409 to S423. A disordered region spans residues S391–E438. Basic and acidic residues predominate over residues T427–E438.

Component of the Lid2 complex composed of ash2, jmj3, lid2, sdc1 and snt2.

It is found in the nucleus. In Schizosaccharomyces pombe (strain 972 / ATCC 24843) (Fission yeast), this protein is Lid2 complex component jmj3.